A 337-amino-acid chain; its full sequence is Geranylgeranyl pyrophosphate synthase subD (337 aa).

Isopentenyl diphosphate-binding residues include Lys-53, Arg-56, and His-85. 2 residues coordinate Mg(2+): Asp-92 and Asp-96. Position 101 (Arg-101) interacts with dimethylallyl diphosphate. Arg-102 serves as a coordination point for isopentenyl diphosphate. The dimethylallyl diphosphate site is built by Lys-179, Thr-180, and Gln-219. Position 222 (Asp-222) interacts with Mg(2+). Residues Asn-226, Lys-236, and Lys-246 each coordinate dimethylallyl diphosphate.

It belongs to the FPP/GGPP synthase family. Mg(2+) serves as cofactor.

It catalyses the reaction isopentenyl diphosphate + dimethylallyl diphosphate = (2E)-geranyl diphosphate + diphosphate. It carries out the reaction isopentenyl diphosphate + (2E)-geranyl diphosphate = (2E,6E)-farnesyl diphosphate + diphosphate. The enzyme catalyses isopentenyl diphosphate + (2E,6E)-farnesyl diphosphate = (2E,6E,10E)-geranylgeranyl diphosphate + diphosphate. It participates in secondary metabolite biosynthesis; terpenoid biosynthesis. Geranylgeranyl pyrophosphate synthase; part of the gene cluster that mediates the biosynthesis of the immunosuppressants subglutinols, meroterpenoids consisting of an alpha-pyrone (4-hydroxy-5,6-dimethyl-2-pyrone) moiety attached to a decalin core fused to a five-membered cyclic ether carrying a prenylside chain. The first step of the pathway is the synthesis of the alpha-pyrone moiety by the polyketide synthase subA via condensation of one acetyl-CoA starter unit with 3 malonyl-CoA units and 2 methylations. The alpha-pyrone is then combined with geranylgeranyl pyrophosphate (GGPP) formed by the GGPP synthase subD through the action of the prenyltransferase subC to yield a linear alpha-pyrone diterpenoid. Subsequent steps in the subglutinol biosynthetic pathway involve the decalin core formation, which is thought to be initiated by the epoxidation of the C10-C11 olefin by the FAD-dependent oxidoreductase subE. The following cyclization cascade would be catalyzed by the terpene cyclase subB. Lastly, the FAD-dependent dehydrogenase subF probably catalyzes the five-membered cyclic ether formation to complete the formation of subglutinol A. Subsequent redox reactions appear to give rise to subglutinol C and D, however, it remains unclear which enzymes are responsible for these transformations. SubD may have secondary function in the conversion of the identified subglutinols to subglutinol analog 45, which seems to be the major product of the cluster. In Metarhizium robertsii (strain ARSEF 23 / ATCC MYA-3075) (Metarhizium anisopliae (strain ARSEF 23)), this protein is Geranylgeranyl pyrophosphate synthase subD.